Here is a 274-residue protein sequence, read N- to C-terminus: NAD kinase (274 aa).

D60 functions as the Proton acceptor in the catalytic mechanism. NAD(+)-binding positions include D60–G61, K65, N127–E128, and R152.

The protein belongs to the NAD kinase family. The cofactor is a divalent metal cation.

The protein resides in the cytoplasm. The catalysed reaction is NAD(+) + ATP = ADP + NADP(+) + H(+). Functionally, involved in the regulation of the intracellular balance of NAD and NADP, and is a key enzyme in the biosynthesis of NADP. Catalyzes specifically the phosphorylation on 2'-hydroxyl of the adenosine moiety of NAD to yield NADP. The sequence is that of NAD kinase from Mycoplasmoides gallisepticum (strain R(low / passage 15 / clone 2)) (Mycoplasma gallisepticum).